Reading from the N-terminus, the 664-residue chain is Probable urea active transporter 1 (664 aa).

Transmembrane regions (helical) follow at residues 9-29 (SVGY…MIFV), 56-76 (GLVA…LTSA), 86-106 (GAFW…VLAI), 132-152 (GVFL…LLCG), 165-185 (TVAV…FGGI), 189-209 (FLTD…FSLA), 252-272 (GAIF…VDNG), 290-310 (ILGG…MGLV), 327-347 (MSDL…ALMG), 353-373 (ATLL…LIAV), 395-415 (LLYT…GFAT), 428-448 (YLLM…VMLF), 454-474 (IAVT…WLVV), 496-516 (AGNV…SIIF), 555-575 (VAAL…MYGT), and 587-607 (WVVV…IFPL).

The protein belongs to the sodium:solute symporter (SSF) (TC 2.A.21) family.

It is found in the membrane. Functionally, involved in active transport of urea. The polypeptide is Probable urea active transporter 1 (dur3-1) (Schizosaccharomyces pombe (strain 972 / ATCC 24843) (Fission yeast)).